The following is a 237-amino-acid chain: Ribonuclease PH (237 aa).

Residues R86 and 124–126 (GTR) contribute to the phosphate site.

The protein belongs to the RNase PH family. As to quaternary structure, homohexameric ring arranged as a trimer of dimers.

It catalyses the reaction tRNA(n+1) + phosphate = tRNA(n) + a ribonucleoside 5'-diphosphate. Its function is as follows. Phosphorolytic 3'-5' exoribonuclease that plays an important role in tRNA 3'-end maturation. Removes nucleotide residues following the 3'-CCA terminus of tRNAs; can also add nucleotides to the ends of RNA molecules by using nucleoside diphosphates as substrates, but this may not be physiologically important. Probably plays a role in initiation of 16S rRNA degradation (leading to ribosome degradation) during starvation. The chain is Ribonuclease PH from Pseudoalteromonas translucida (strain TAC 125).